We begin with the raw amino-acid sequence, 524 residues long: DNA damage-binding protein CMR1 (524 aa).

The segment at 35-79 (EKIIPKPAPPKPKRASAPRAKREPVKRETARPTRQSSRLAGLDAD) is disordered. The segment covering 54–65 (AKREPVKRETAR) has biased composition (basic and acidic residues). WD repeat units follow at residues 184-225 (LVPQ…VKAE), 245-285 (THSR…STEA), 295-332 (LPIS…STAE), 336-376 (LTDQ…GKGD), 385-425 (THDS…KWTA), 447-490 (GRWV…LAQL), and 493-524 (DGIT…CLWM).

This sequence belongs to the WD repeat DDB2/WDR76 family.

In terms of biological role, DNA-binding protein that binds to both single- and double-stranded DNA. Binds preferentially to UV-damaged DNA. May be involved in DNA-metabolic processes. This is DNA damage-binding protein CMR1 from Chaetomium globosum (strain ATCC 6205 / CBS 148.51 / DSM 1962 / NBRC 6347 / NRRL 1970) (Soil fungus).